A 521-amino-acid chain; its full sequence is Acidic amino acid decarboxylase GADL1 (521 aa).

Basic and acidic residues predominate over residues 1–12 (MSLLPDRERAPD). Residues 1-20 (MSLLPDRERAPDGDISPQEM) form a disordered region. Lys-333 carries the post-translational modification N6-(pyridoxal phosphate)lysine.

It belongs to the group II decarboxylase family. Homodimer. Pyridoxal 5'-phosphate is required as a cofactor. As to expression, expressed at highest levels in skeletal muscles. Also detected heart, spleen and rumen.

It carries out the reaction L-aspartate + H(+) = beta-alanine + CO2. The catalysed reaction is 3-sulfino-L-alanine + H(+) = hypotaurine + CO2. It catalyses the reaction L-cysteate + H(+) = taurine + CO2. In terms of biological role, catalyzes the decarboxylation of L-aspartate, 3-sulfino-L-alanine (cysteine sulfinic acid), and L-cysteate to beta-alanine, hypotaurine and taurine, respectively. The preferred substrate is L-aspartate. Does not exhibit any decarboxylation activity toward glutamate. This chain is Acidic amino acid decarboxylase GADL1 (GADL1), found in Bos taurus (Bovine).